The primary structure comprises 421 residues: Type II methyltransferase M.SfiI (421 aa).

Belongs to the N(4)/N(6)-methyltransferase family. N(4) subfamily.

It catalyses the reaction a 2'-deoxycytidine in DNA + S-adenosyl-L-methionine = an N(4)-methyl-2'-deoxycytidine in DNA + S-adenosyl-L-homocysteine + H(+). A beta subtype methylase, recognizes the double-stranded sequence 5'-GGCCNNNNNGGCC-3', methylates C-? on both strands, and protects the DNA from cleavage by the SfiI endonuclease. This chain is Type II methyltransferase M.SfiI, found in Streptomyces fimbriatus.